The following is a 473-amino-acid chain: Reticulon-4 receptor (473 aa).

Residues 1 to 26 form the signal peptide; that stretch reads MKRASSGGSRLLAWVLWLQAWRVATP. 2 disulfides stabilise this stretch: C27/C33 and C31/C43. The LRRNT domain maps to 27-57; the sequence is CPGACVCYNEPKVTTSCPQQGLQAVPTGIPA. 8 LRR repeats span residues 58 to 79, 82 to 103, 106 to 128, 131 to 152, 155 to 176, 179 to 200, 203 to 224, and 227 to 248; these read SSQR…SFQS, NLTI…AFTG, LLEQ…TFHG, HLHT…LFRG, ALQY…TFRD, NLTH…AFRG, SLDR…AFRD, and RLMT…VLMP. N-linked (GlcNAc...) asparagine glycosylation is present at N82. N179 carries an N-linked (GlcNAc...) asparagine glycan. In terms of domain architecture, LRRCT spans 260-311; it reads NPWVCDCRARPLWAWLQKFRGSSSEVPCNLPQRLADRDLKRLAASDLEGCAV. Disulfide bonds link C264–C287, C266–C335, and C309–C336. A disordered region spans residues 346-446; it reads VLEPGRPASA…GASGTGDAEG (101 aa). N-linked (GlcNAc...) asparagine glycosylation occurs at N372. A compositionally biased stretch (basic residues) spans 413–429; that stretch reads PRRRPGCSRKNRTRSHC. The span at 434 to 445 shows a compositional bias: gly residues; sequence AGSGASGTGDAE. A lipid anchor (GPI-anchor amidated serine) is attached at S447. A propeptide spans 448 to 473 (removed in mature form); that stretch reads GALPALACSLAPLGLALVLWTVLGPC.

It belongs to the Nogo receptor family. Homodimer. Interacts with MAG. Interacts with RTN4. Interacts with NGFR. Interacts with LINGO1. Interacts with KIAA0319L. Interacts with OLFM1; this inhibits interaction with LINGO1 and NGFR. Interacts with OMG. In terms of processing, N-glycosylated. O-glycosylated. Contains terminal sialic acid groups on its glycan chains. In terms of tissue distribution, detected in embryonic hippocampus neurons. Detected in brain (at protein level). Detected in neurons in the neocortex, in hippocampus, dorsal thalamus, cerebellum granule cell layer and the mitral cell layer in the olfactory bulb. Detected in brain, dorsal root ganglion and heart.

Its subcellular location is the cell membrane. It is found in the membrane raft. The protein resides in the cell projection. The protein localises to the dendrite. It localises to the axon. Its subcellular location is the perikaryon. In terms of biological role, receptor for RTN4, OMG and MAG. Functions as a receptor for the sialylated gangliosides GT1b and GM1. Besides, functions as a receptor for chondroitin sulfate proteoglycans. Can also bind heparin. Intracellular signaling cascades are triggered via the coreceptor NGFR. Signaling mediates activation of Rho and downstream reorganization of the actin cytoskeleton. Mediates axonal growth inhibition. Mediates axonal growth inhibition and plays a role in regulating axon regeneration and neuronal plasticity in the adult central nervous system. Plays a role in postnatal brain development. Required for normal axon migration across the brain midline and normal formation of the corpus callosum. Protects motoneurons against apoptosis; protection against apoptosis is probably mediated via interaction with MAG. Acts in conjunction with RTN4 and LINGO1 in regulating neuronal precursor cell motility during cortical development. Like other family members, plays a role in restricting the number dendritic spines and the number of synapses that are formed during brain development. In Mus musculus (Mouse), this protein is Reticulon-4 receptor (Rtn4r).